A 150-amino-acid polypeptide reads, in one-letter code: Flagellar assembly factor FliW (150 aa).

It belongs to the FliW family. In terms of assembly, interacts with translational regulator CsrA and flagellin(s).

The protein localises to the cytoplasm. Functionally, acts as an anti-CsrA protein, binds CsrA and prevents it from repressing translation of its target genes, one of which is flagellin. Binds to flagellin and participates in the assembly of the flagellum. This Leptospira borgpetersenii serovar Hardjo-bovis (strain L550) protein is Flagellar assembly factor FliW.